Consider the following 273-residue polypeptide: Tetraspanin-8 (273 aa).

Over methionine 1–asparagine 7 the chain is Cytoplasmic. The chain crosses the membrane as a helical span at residues leucine 8–isoleucine 28. Residues tryptophan 29–proline 45 lie on the Extracellular side of the membrane. Residues valine 46–cysteine 66 form a helical membrane-spanning segment. Residues arginine 67–tyrosine 75 lie on the Cytoplasmic side of the membrane. Residues leucine 76–valine 96 traverse the membrane as a helical segment. At threonine 97–alanine 235 the chain is on the extracellular side. An N-linked (GlcNAc...) asparagine glycan is attached at asparagine 192. The helical transmembrane segment at isoleucine 236–phenylalanine 256 threads the bilayer. The Cytoplasmic segment spans residues arginine 257–proline 273.

This sequence belongs to the tetraspanin (TM4SF) family.

The protein localises to the membrane. In terms of biological role, may be involved in the regulation of cell differentiation. This chain is Tetraspanin-8 (TET8), found in Arabidopsis thaliana (Mouse-ear cress).